We begin with the raw amino-acid sequence, 84 residues long: Serine protease inhibitor Kazal-type 2 (84 aa).

An N-terminal signal peptide occupies residues 1-23 (MALSVLRLALLLLAVTFAASLIP). Residue Gln24 is modified to Pyrrolidone carboxylic acid. The Kazal-like domain maps to 30 to 84 (KYRTPNCSQYRLPGCPRHFNPVCGSDMSTYANECTLCMKIREGGHNIKIIRNGPC). Intrachain disulfides connect Cys36–Cys66, Cys44–Cys63, and Cys52–Cys84.

Expressed in epididymis (at protein level).

It localises to the secreted. The protein localises to the cytoplasmic vesicle. The protein resides in the secretory vesicle. It is found in the acrosome. As a strong inhibitor of acrosin, it is required for normal spermiogenesis. It probably hinders premature activation of proacrosin and other proteases, thus preventing the cascade of events leading to spermiogenesis defects. May be involved in the regulation of serine protease-dependent germ cell apoptosis. It also inhibits trypsin. This Homo sapiens (Human) protein is Serine protease inhibitor Kazal-type 2 (SPINK2).